A 559-amino-acid polypeptide reads, in one-letter code: MRYKFMGDSLSIRNEKAFEAALQALRRHATKDGVYDIRRHFVEDEQRFSHFSLRLDDLLFDFSKCGITFKTLQLLDDLAVAADVLGRREAMFSGKAINTTEKRSVLHIALRMPTDEVFMLDGHDLVRDIQDVLAHMERFSEMVRDGSYKGNTGEKIINIVNIGIGGSDLGPAMVTHALKPYHDGPHCHFVSNADTAHISDTLSVLNPATTLFIIASKTFTTAETIANAQVARQWIISHLGEEAVCRHFVAVSSALDKVAEFGIDSSRIFKFWDWVGGRYSIWSAIGLVVMLAIGGQNFRQFLNGAQQMDRHFKIAPLHKNIPIRFALLGFWHRVVCGYASRAIIPYAQRLARFPAYLQQLDMESNGKQVSLDGKTLNFSSGPVVWGDSGTNGQHAFFQLLHQGTDVIPVEFILFIKGHEQNLHPMYDILVANCLAQSKALMKGRSVEDVRRILVKSGIDVHETEKLALHKSFEGNRPSIMLVQDLLTPFTLGRLIALYEHRIFVEGILMNINSFDQWGVEFGKELANELLPILRGENKANNRDSSTLGLLAYIQARREE.

E363 (proton donor) is an active-site residue. Catalysis depends on residues H394 and K523.

The protein belongs to the GPI family.

Its subcellular location is the cytoplasm. The catalysed reaction is alpha-D-glucose 6-phosphate = beta-D-fructose 6-phosphate. It participates in carbohydrate biosynthesis; gluconeogenesis. It functions in the pathway carbohydrate degradation; glycolysis; D-glyceraldehyde 3-phosphate and glycerone phosphate from D-glucose: step 2/4. Catalyzes the reversible isomerization of glucose-6-phosphate to fructose-6-phosphate. In Bartonella quintana (strain Toulouse) (Rochalimaea quintana), this protein is Glucose-6-phosphate isomerase.